A 566-amino-acid polypeptide reads, in one-letter code: E3 ubiquitin-protein ligase Rnf220 (566 aa).

Residue Lys-277 forms a Glycyl lysine isopeptide (Lys-Gly) (interchain with G-Cter in SUMO2) linkage. The disordered stretch occupies residues 277–300 (KREGDSPTASPHSSATEDLHHSDR). The segment covering 291–300 (ATEDLHHSDR) has biased composition (basic and acidic residues). Ser-390 is modified (phosphoserine). Residues 485-513 (EESAVTTFEALKARVRELERQLSRGDRYK) adopt a coiled-coil conformation. The interval 514–522 (CLICMDSYS) is required for targeting to the cytoplasm. An RING-type zinc finger spans residues 514 to 553 (CLICMDSYSMPLTSIQCWHVHCEECWLRTLGAKKLCPQCN).

Interacts with SIN3B. Interacts with CTNNB1 (via Armadillo repeats 2-8). Interacts with USP7 (via MATH domain). Post-translationally, auto-ubiquitinated; leads to proteasomal degradation. In terms of tissue distribution, in the brain, expressed in the hippocampus, telenecephalon and cerebellum. No expression in astro glial cells or in neural progenitor cells.

The protein localises to the cytoplasm. Its subcellular location is the nucleus. It carries out the reaction S-ubiquitinyl-[E2 ubiquitin-conjugating enzyme]-L-cysteine + [acceptor protein]-L-lysine = [E2 ubiquitin-conjugating enzyme]-L-cysteine + N(6)-ubiquitinyl-[acceptor protein]-L-lysine.. The protein operates within protein modification; protein ubiquitination. In terms of biological role, E3 ubiquitin-protein ligase that promotes the ubiquitination and proteasomal degradation of SIN3B. Independently of its E3 ligase activity, acts as a CTNNB1 stabilizer through USP7-mediated deubiquitination of CTNNB1 and promotes Wnt signaling. Plays a critical role in the regulation of nuclear lamina. The sequence is that of E3 ubiquitin-protein ligase Rnf220 (Rnf220) from Mus musculus (Mouse).